The following is a 176-amino-acid chain: ATP-dependent protease subunit HslV (176 aa).

Thr2 is a catalytic residue. Residues Gly157, Cys160, and Thr163 each contribute to the Na(+) site.

This sequence belongs to the peptidase T1B family. HslV subfamily. As to quaternary structure, a double ring-shaped homohexamer of HslV is capped on each side by a ring-shaped HslU homohexamer. The assembly of the HslU/HslV complex is dependent on binding of ATP.

The protein resides in the cytoplasm. It carries out the reaction ATP-dependent cleavage of peptide bonds with broad specificity.. With respect to regulation, allosterically activated by HslU binding. Functionally, protease subunit of a proteasome-like degradation complex believed to be a general protein degrading machinery. This is ATP-dependent protease subunit HslV from Ectopseudomonas mendocina (strain ymp) (Pseudomonas mendocina).